Here is a 333-residue protein sequence, read N- to C-terminus: uncharacterized protein (333 aa).

This is an uncharacterized protein from Escherichia coli (Bacteriophage T4).